The chain runs to 446 residues: Phosphoglucosamine mutase (446 aa).

Catalysis depends on S103, which acts as the Phosphoserine intermediate. Mg(2+) contacts are provided by S103, D242, D244, and D246. S103 is subject to Phosphoserine.

This sequence belongs to the phosphohexose mutase family. It depends on Mg(2+) as a cofactor. Activated by phosphorylation.

It carries out the reaction alpha-D-glucosamine 1-phosphate = D-glucosamine 6-phosphate. Functionally, catalyzes the conversion of glucosamine-6-phosphate to glucosamine-1-phosphate. The chain is Phosphoglucosamine mutase from Vibrio vulnificus (strain YJ016).